The primary structure comprises 222 residues: Interleukin-12 subunit alpha (222 aa).

A signal peptide spans 1–25 (MCPLRNLLLVATLVLLNHLDHLSLG). Intrachain disulfides connect C40-C113, C67-C199, and C88-C126. 2 N-linked (GlcNAc...) asparagine glycosylation sites follow: N42 and N96.

This sequence belongs to the IL-6 superfamily. Heterodimer with IL12B; disulfide-linked. This heterodimer is known as interleukin IL-12. Heterodimer with EBI3/IL27B; not disulfide-linked. This heterodimer is known as interleukin IL-35. Interacts with NBR1; this interaction promotes IL-12 secretion.

It is found in the secreted. Its function is as follows. Heterodimerizes with IL12B to form the IL-12 cytokine or with EBI3/IL27B to form the IL-35 cytokine. IL-12 is primarily produced by professional antigen-presenting cells (APCs) such as B-cells and dendritic cells (DCs) as well as macrophages and granulocytes and regulates T-cell and natural killer-cell responses, induces the production of interferon-gamma (IFN-gamma), favors the differentiation of T-helper 1 (Th1) cells and is an important link between innate resistance and adaptive immunity. Mechanistically, exerts its biological effects through a receptor composed of IL12R1 and IL12R2 subunits. Binding to the receptor results in the rapid tyrosine phosphorylation of a number of cellular substrates including the JAK family kinases TYK2 and JAK2. In turn, recruited STAT4 gets phosphorylated and translocates to the nucleus where it regulates cytokine/growth factor responsive genes. As part of IL-35, plays essential roles in maintaining the immune homeostasis of the liver microenvironment and also functions as an immune-suppressive cytokine. Mediates biological events through unconventional receptors composed of IL12RB2 and gp130/IL6ST heterodimers or homodimers. Signaling requires the transcription factors STAT1 and STAT4, which form a unique heterodimer that binds to distinct DNA sites. This chain is Interleukin-12 subunit alpha (IL12A), found in Sus scrofa (Pig).